A 32-amino-acid polypeptide reads, in one-letter code: Alcohol dehydrogenase-related 31 kDa protein (32 aa).

NAD(+) is bound at residue 11-32 (YVADCGGIALETSXVLMTKNIA).

It belongs to the short-chain dehydrogenases/reductases (SDR) family.

The polypeptide is Alcohol dehydrogenase-related 31 kDa protein (Adhr) (Drosophila yakuba (Fruit fly)).